Here is a 589-residue protein sequence, read N- to C-terminus: Serine/threonine-protein phosphatase 2A 65 kDa regulatory subunit A alpha isoform (589 aa).

Residue Ala2 is modified to N-acetylalanine. 15 HEAT repeats span residues 8–46 (DSLYPIAVLIDELRNEDVQLRLNSIKKLSTIALALGVER), 47–84 (TRSELLPFLTDTIYDEDEVLLALAEQLGTFTTLVGGPE), 85–123 (YVHCLLPPLESLATVEETVVRDKAVESLRAISHEHSPSD), 124–161 (LEAHFVPLVKRLAGGDWFTSRTSACGLFSVCYPRVSSA), 162–200 (VKAELRQYFRNLCSDDTPMVRRAAASKLGEFAKVLELDN), 201–239 (VKSEIIPMFSNLASDEQDSVRLLAVEACVNIAQLLPQED), 240–278 (LEALVMPTLRQAAEDKSWRVRYMVADKFTELQKAVGPEI), 279–321 (TKTD…RENV), 322–360 (IMSQILPCIKELVSDANQHVKSALASVIMGLSPILGKDN), 361–399 (TIEHLLPLFLAQLKDECPEVRLNIISNLDCVNEVIGIRQ), 400–438 (LSQSLLPAIVELAEDAKWRVRLAIIEYMPLLAGQLGVEF), 439–477 (FDEKLNSLCMAWLVDHVYAIREAATSNLKKLVEKFGKEW), 478–516 (AHATIIPKVLAMSGDPNYLHRMTTLFCINVLSEVCGQDI), 517–555 (TTKHMLPTVLRMAGDPVANVRFNVAKSLQKIGPILDNST), and 556–589 (LQSEVKPILEKLTQDQDVDVKYFAQEALTVLSLA). The tract at residues 8–399 (DSLYPIAVLI…CVNEVIGIRQ (392 aa)) is PP2A subunit B binding. Residues 47–321 (TRSELLPFLT…NLSADCRENV (275 aa)) form a polyoma small and medium T antigens Binding region. The tract at residues 85-239 (YVHCLLPPLE…NIAQLLPQED (155 aa)) is SV40 small T antigen binding. N6-acetyllysine is present on Lys280. The PP2A subunit C binding stretch occupies residues 400–589 (LSQSLLPAIV…QEALTVLSLA (190 aa)).

This sequence belongs to the phosphatase 2A regulatory subunit A family. In terms of assembly, PP2A consists of a common heterodimeric core enzyme, composed of PPP2CA a 36 kDa catalytic subunit (subunit C) and PPP2R1A a 65 kDa constant regulatory subunit (PR65 or subunit A), that associates with a variety of regulatory subunits. Proteins that associate with the core dimer include three families of regulatory subunits B (the R2/B/PR55/B55, R3/B''/PR72/PR130/PR59 and R5/B'/B56 families), the 48 kDa variable regulatory subunit, viral proteins, and cell signaling molecules. Found in a complex with at least ARL2, PPP2CB, PPP2R1A, PPP2R2A, PPP2R5E and TBCD. Interacts with the PP2A C catalytic subunit PPP2CA. Interacts with the PP2A B subunit PPP2R2A. Interacts with the PP2A B subunit PPP2R5D. Interacts with FOXO1; the interaction dephosphorylates FOXO1 on AKT-mediated phosphorylation sites. Interacts with IPO9. Interacts with TP53 and SGO1. Interacts with PLA2G16; this interaction might decrease PP2A activity. Interacts with CTTNBP2NL. Interacts with GNA12; the interaction promotes protein phosphatase 2A activation causing dephosphorylation of MAPT. Interacts with CIP2A; this interaction stabilizes CIP2A. Interacts with PABIR1/FAM122A. Interacts with ADCY8; antagonizes interaction between ADCY8 and calmodulin. Interacts with CRTC3 (when phosphorylated at 'Ser-391'). Interacts with SPRY2. Part of the core of STRIPAK complexes composed of PP2A catalytic and scaffolding subunits, the striatins (PP2A regulatory subunits), the striatin-associated proteins MOB4, STRIP1 and STRIP2, PDCD10 and members of the STE20 kinases, such as STK24 and STK26. Component of the Integrator-PP2A (INTAC) complex, composed of the Integrator core complex and protein phosphatase 2A subunits PPP2CA and PPP2R1A. As to quaternary structure, (Microbial infection) Interacts with JC virus small t antigen; this interaction inhibits PPP2R1A activity.

It localises to the cytoplasm. The protein localises to the nucleus. Its subcellular location is the chromosome. The protein resides in the centromere. It is found in the lateral cell membrane. It localises to the cell projection. The protein localises to the dendrite. The PR65 subunit of protein phosphatase 2A serves as a scaffolding molecule to coordinate the assembly of the catalytic subunit and a variable regulatory B subunit. Upon interaction with GNA12 promotes dephosphorylation of microtubule associated protein TAU/MAPT. Required for proper chromosome segregation and for centromeric localization of SGO1 in mitosis. Together with RACK1 adapter, mediates dephosphorylation of AKT1 at 'Ser-473', preventing AKT1 activation and AKT-mTOR signaling pathway. Dephosphorylation of AKT1 is essential for regulatory T-cells (Treg) homeostasis and stability. Part of the striatin-interacting phosphatase and kinase (STRIPAK) complexes. STRIPAK complexes have critical roles in protein (de)phosphorylation and are regulators of multiple signaling pathways including Hippo, MAPK, nuclear receptor and cytoskeleton remodeling. Different types of STRIPAK complexes are involved in a variety of biological processes such as cell growth, differentiation, apoptosis, metabolism and immune regulation. Key mediator of a quality checkpoint during transcription elongation as part of the Integrator-PP2A (INTAC) complex. The INTAC complex drives premature transcription termination of transcripts that are unfavorably configured for transcriptional elongation: within the INTAC complex, acts as a scaffolding subunit for PPP2CA, which catalyzes dephosphorylation of the C-terminal domain (CTD) of Pol II subunit POLR2A/RPB1 and SUPT5H/SPT5, thereby preventing transcriptional elongation. Regulates the recruitment of the SKA complex to kinetochores. The polypeptide is Serine/threonine-protein phosphatase 2A 65 kDa regulatory subunit A alpha isoform (Homo sapiens (Human)).